A 666-amino-acid chain; its full sequence is Probable potassium transport system protein Kup (666 aa).

12 consecutive transmembrane segments (helical) span residues 16–36 (GFII…LYTM), 58–78 (ISLI…LVAL), 99–119 (TPWL…DGAL), 141–161 (IFQN…LLFA), 167–187 (TGVI…FLGI), 221–241 (IFIL…YSDL), 253–273 (WPFV…WILA), 292–312 (FTMH…QALI), 343–363 (TYIP…VLLF), 373–393 (YGLA…FFLI), 402–422 (VLLM…ASAV), and 424–444 (FMHG…IMTI).

This sequence belongs to the HAK/KUP transporter (TC 2.A.72) family.

The protein resides in the cell membrane. It catalyses the reaction K(+)(in) + H(+)(in) = K(+)(out) + H(+)(out). Transport of potassium into the cell. Likely operates as a K(+):H(+) symporter. This Streptococcus agalactiae serotype Ia (strain ATCC 27591 / A909 / CDC SS700) protein is Probable potassium transport system protein Kup.